We begin with the raw amino-acid sequence, 148 residues long: Nucleoside diphosphate kinase (148 aa).

The ATP site is built by lysine 9, phenylalanine 57, arginine 85, threonine 91, arginine 102, and asparagine 112. The Pros-phosphohistidine intermediate role is filled by histidine 115.

It belongs to the NDK family. It depends on Mg(2+) as a cofactor.

The catalysed reaction is a 2'-deoxyribonucleoside 5'-diphosphate + ATP = a 2'-deoxyribonucleoside 5'-triphosphate + ADP. The enzyme catalyses a ribonucleoside 5'-diphosphate + ATP = a ribonucleoside 5'-triphosphate + ADP. Its function is as follows. Major role in the synthesis of nucleoside triphosphates other than ATP. The ATP gamma phosphate is transferred to the NDP beta phosphate via a ping-pong mechanism, using a phosphorylated active-site intermediate. This Helianthus annuus (Common sunflower) protein is Nucleoside diphosphate kinase.